A 1068-amino-acid polypeptide reads, in one-letter code: Receptor-like protein 13 (1068 aa).

The first 23 residues, 1–23, serve as a signal peptide directing secretion; that stretch reads MEGKLFLGQYLICVILLLGQLHG. The Extracellular portion of the chain corresponds to 24-986; it reads YKSCIEKERK…EADESTVDME (963 aa). N59 and N97 each carry an N-linked (GlcNAc...) asparagine glycan. 19 LRR repeats span residues 104 to 129, 139 to 162, 164 to 187, 188 to 212, 216 to 239, 241 to 264, 265 to 290, 292 to 315, 325 to 349, 350 to 373, 375 to 397, 398 to 423, 424 to 447, 448 to 471, 472 to 497, 499 to 517, 519 to 543, 544 to 567, and 569 to 594; these read FEDV…LFDD, LRNL…FLNA, TSLT…EFKD, LTNL…DYNS, FRKL…FLNS, TSLK…ELRD, LTNV…LFAL, KLKA…KFAK, WKNM…LTSL, TGLR…LANL, SLEY…LLAN, LSKL…SWKP, KFQL…LLHQ, KDLH…LLEN, NTKL…AHNL, FLNV…NFGW, LPHL…LDNM, KSIE…FLKG, and YNLT…NFTR. An N-linked (GlcNAc...) asparagine glycan is attached at N153. N-linked (GlcNAc...) asparagine glycosylation is present at N202. N279 carries N-linked (GlcNAc...) asparagine glycosylation. Residue N397 is glycosylated (N-linked (GlcNAc...) asparagine). N-linked (GlcNAc...) asparagine glycosylation is found at N471, N482, and N501. 2 N-linked (GlcNAc...) asparagine glycosylation sites follow: N570 and N591. The LRR 20; degenerate repeat unit spans residues 596 to 615; that stretch reads WVMSMDNNLFTGNIGKGFRS. LRR repeat units lie at residues 616 to 639, 641 to 664, 665 to 688, 690 to 710, and 711 to 734; these read LPSL…WIGE, QGLF…LFNI, SYLQ…VSSI, HGAV…DTLL, and LNVI…INTQ. The N-linked (GlcNAc...) asparagine glycan is linked to N663. Residue N700 is glycosylated (N-linked (GlcNAc...) asparagine). Residues N735, N745, N771, N780, and N822 are each glycosylated (N-linked (GlcNAc...) asparagine). LRR repeat units lie at residues 736 to 757 and 758 to 781; these read ISIL…FCSL and SNIQ…LSNT. LRR repeat units follow at residues 846 to 870, 871 to 893, 895 to 918, and 920 to 943; these read LKLL…LGGL, VELE…SFSG, KNVE…LTDM, and SLAV…QFNT. N877 and N882 each carry an N-linked (GlcNAc...) asparagine glycan. N-linked (GlcNAc...) asparagine glycosylation is found at N925 and N930. A helical membrane pass occupies residues 987–1007; sequence SFYWSFVAAYVTILLGILASL. Residues 1008–1068 are Cytoplasmic-facing; it reads SFDSPWSRAW…PPALFHKTRT (61 aa).

The protein belongs to the RLP family.

The protein localises to the cell membrane. The polypeptide is Receptor-like protein 13 (Arabidopsis thaliana (Mouse-ear cress)).